Reading from the N-terminus, the 446-residue chain is White-opaque regulator 2 (446 aa).

Positions 1–24 (MTQLPSVSELINRTGSIGSSSNIT) are enriched in polar residues. The segment at 1 to 203 (MTQLPSVSEL…QPNFPYHNNF (203 aa)) is disordered. A compositionally biased stretch (low complexity) spans 30-64 (TTTSATNTTTAATATTVTSTTPRSENSYSPNSPYS). The segment covering 67-86 (TRPSNTSLTNYSAGSGITVA) has biased composition (polar residues). Low complexity-rich tracts occupy residues 87–97 (SSSFQFSQPSP) and 104–120 (STSS…QHQS). Over residues 121–144 (NPSGVSMSSNTSPRTSIVQSMSSV) the composition is skewed to polar residues. Residues 166-184 (VQPPPQQQQLQQPPPPPPQ) are compositionally biased toward pro residues. Over residues 185 to 195 (QQQHIYPQQQP) the composition is skewed to low complexity. Residues 305 to 332 (CLTCRKRRIKCDERKPTCFNCERSKKSC) constitute a DNA-binding region (zn(2)-C6 fungal-type). The interval 336–402 (QDLSKLPPRK…SGSSTNSRNL (67 aa)) is disordered. Low complexity predominate over residues 358-369 (NQQQQQQQQNQQ). Residues 387 to 401 (HQITSISGSSTNSRN) show a composition bias toward polar residues.

Its subcellular location is the nucleus. Its function is as follows. Transcriptional regulator of the switch between 2 heritable states, the white and opaque states. These 2 cell types differ in many characteristics, including cell structure, mating competence, and virulence. Each state is heritable for many generations, and switching between states occurs stochastically, at low frequency. WOR2 is necessary for the stability of the opaque state phenotypic switching from the white to the opaque phase is a necessary step for mating. Plays a role in cell adhesion and pseudohyphal growth. In Candida albicans (strain SC5314 / ATCC MYA-2876) (Yeast), this protein is White-opaque regulator 2 (WOR2).